A 614-amino-acid chain; its full sequence is Probable NOT transcription complex subunit VIP2 (614 aa).

Disordered stretches follow at residues Met1–Gly46, Asn58–Arg89, and Asn361–Pro391. Residues Ala364–Thr381 show a composition bias toward polar residues.

The protein belongs to the CNOT2/3/5 family. In terms of assembly, interacts with Agrobacterium tumefaciens VirE2. Binds to VIP1. Forms a complex made of Agrobacterium VirE2, VIP1, VIP2 and single-stranded DNA (ssDNA).

Its subcellular location is the nucleus. Its function is as follows. Transcriptional regulator required for Agrobacterium-mediated stable genetic transformation by T-DNA integration in host genome, but not for T-DNA transient expression. The sequence is that of Probable NOT transcription complex subunit VIP2 (VIP2) from Arabidopsis thaliana (Mouse-ear cress).